The sequence spans 106 residues: Phosphoribosyl-ATP pyrophosphatase (106 aa).

Belongs to the PRA-PH family.

Its subcellular location is the cytoplasm. It catalyses the reaction 1-(5-phospho-beta-D-ribosyl)-ATP + H2O = 1-(5-phospho-beta-D-ribosyl)-5'-AMP + diphosphate + H(+). It participates in amino-acid biosynthesis; L-histidine biosynthesis; L-histidine from 5-phospho-alpha-D-ribose 1-diphosphate: step 2/9. This Lactiplantibacillus plantarum (strain ATCC BAA-793 / NCIMB 8826 / WCFS1) (Lactobacillus plantarum) protein is Phosphoribosyl-ATP pyrophosphatase.